The chain runs to 701 residues: GKSEEPNCACDQFRCGNGKCIPEAWKCNNMDECGDSSDEEICAKEANPPTATAFQPCAYNQFQCLSRFTKVYTCLAESLKCDGNIDCLDLGDEIDCDVPTCGQWLKYFYGTFNSPNYPDFYPPGSNCTWLIDTGDHRKVILCFTDFKLDGTGYGDYVKIYDGLEENPHKLLRVLTAFDSHAPLTVVSSSGQIRVHFCADKVNAARGFNATYQVDGFCLPWEIPCGGNWGCYTEQQRCDGYWHCPNGRDEINCTMCQKEEFPCSRNGVCYPRSDRCNYQNHCPNGSDEKNCFFCQPGNFHCKNNRCVFESWVCDSQDDCGDGSDEENCPVIVPTRVITAAVIGSLICGLLLVIALGCTCKLYSLRMFERRSFETQLSRVEAELLRREAPPSYGQLIAQGLIPPVEDFPVCSPNQASVLENLRLAVRSQLGFTSVRLPMAGRSSNIWNRIFNFARSRHSGSLALVSADGDEVVPSQSTSREPERNHTHRSLFSVESDDTDTENERRDTAGASGGVAAPLPQKVPPTTAVEATVGACASSSTQSARGGHADNGRDVTSVEPPSVSPARHQLTSALSRMTQGLRWVRFTLGRSSSVSQNQSPLRQLDNGVSGREDDDDVEMLIPVSDGSSDFDVNDCSRPLLDLASDQGQGLRQPYSATNPGVRPSNRDGPCERCGIVHTAQIPDTCLEVTLKNETSDDEALLLC.

Residues 1-334 lie on the Extracellular side of the membrane; it reads GKSEEPNCAC…ENCPVIVPTR (334 aa). LDL-receptor class A domains lie at 7 to 43 and 56 to 97; these read NCACDQFRCGNGKCIPEAWKCNNMDECGDSSDEEICA and PCAY…IDCD. Disulfide bonds link cysteine 8/cysteine 20, cysteine 15/cysteine 33, cysteine 27/cysteine 42, cysteine 57/cysteine 74, cysteine 64/cysteine 87, cysteine 81/cysteine 96, and cysteine 101/cysteine 127. The CUB domain maps to 101-214; the sequence is CGQWLKYFYG…RGFNATYQVD (114 aa). Asparagine 126 and asparagine 208 each carry an N-linked (GlcNAc...) asparagine glycan. 3 LDL-receptor class A domains span residues 216–253, 254–291, and 292–328; these read FCLPWEIPCGGNWGCYTEQQRCDGYWHCPNGRDEINCT, MCQKEEFPCSRNGVCYPRSDRCNYQNHCPNGSDEKNCF, and FCQPGNFHCKNNRCVFESWVCDSQDDCGDGSDEENCP. Intrachain disulfides connect cysteine 217–cysteine 230, cysteine 224–cysteine 243, cysteine 237–cysteine 252, cysteine 255–cysteine 268, cysteine 262–cysteine 281, cysteine 275–cysteine 290, cysteine 293–cysteine 305, cysteine 300–cysteine 318, and cysteine 312–cysteine 327. Asparagine 251 carries N-linked (GlcNAc...) asparagine glycosylation. A glycan (N-linked (GlcNAc...) asparagine) is linked at asparagine 283. Residues 335–355 form a helical membrane-spanning segment; sequence VITAAVIGSLICGLLLVIALG. At 356–701 the chain is on the cytoplasmic side; the sequence is CTCKLYSLRM…TSDDEALLLC (346 aa). 4 disordered regions span residues 465-520, 535-565, 590-612, and 643-665; these read ADGD…LPQK, ASSSTQSARGGHADNGRDVTSVEPPSVSPAR, SSVSQNQSPLRQLDNGVSGREDD, and DQGQGLRQPYSATNPGVRPSNRD. Composition is skewed to polar residues over residues 590-599 and 643-656; these read SSVSQNQSPL and DQGQGLRQPYSATN.

Belongs to the LDLR family. May interact with RACK1, ZFYVE9 and NMRK2.

The protein localises to the membrane. It localises to the coated pit. Probable receptor, which may be involved in the internalization of lipophilic molecules and/or signal transduction. May act as a tumor suppressor. The chain is Low-density lipoprotein receptor-related protein 12 (LRP12) from Macaca fascicularis (Crab-eating macaque).